The chain runs to 216 residues: Somatotropin (216 aa).

The N-terminal stretch at 1–26 (MAADSQTSRLLTFTLLCLLWPQEAGA) is a signal peptide. His45 contributes to the Zn(2+) binding site. Cys78 and Cys189 are joined by a disulfide. Ser131 is modified (phosphoserine). Glu198 is a Zn(2+) binding site. An intrachain disulfide couples Cys206 to Cys214.

The protein belongs to the somatotropin/prolactin family.

Its subcellular location is the secreted. Functionally, plays an important role in growth control. Its major role in stimulating body growth is to stimulate the liver and other tissues to secrete IGF1. It stimulates both the differentiation and proliferation of myoblasts. It also stimulates amino acid uptake and protein synthesis in muscle and other tissues. The polypeptide is Somatotropin (GH1) (Mesocricetus auratus (Golden hamster)).